We begin with the raw amino-acid sequence, 372 residues long: uncharacterized protein (372 aa).

Residues Asp-202 and 227–229 (GDF) each bind S-adenosyl-L-methionine.

This sequence belongs to the class I-like SAM-binding methyltransferase superfamily. Cation-independent O-methyltransferase family.

This is an uncharacterized protein from Methanocaldococcus jannaschii (strain ATCC 43067 / DSM 2661 / JAL-1 / JCM 10045 / NBRC 100440) (Methanococcus jannaschii).